The following is a 462-amino-acid chain: Fumarate hydratase class II (462 aa).

Residues Ser97 to Thr99, His127 to Asp130, Ser137 to Asn139, and Thr185 each bind substrate. The active-site Proton donor/acceptor is His186. Ser316 is a catalytic residue. Substrate-binding positions include Ser317 and Lys322–Asn324.

This sequence belongs to the class-II fumarase/aspartase family. Fumarase subfamily. In terms of assembly, homotetramer.

The protein localises to the cytoplasm. It catalyses the reaction (S)-malate = fumarate + H2O. Its pathway is carbohydrate metabolism; tricarboxylic acid cycle; (S)-malate from fumarate: step 1/1. Functionally, involved in the TCA cycle. Catalyzes the stereospecific interconversion of fumarate to L-malate. This Halalkalibacterium halodurans (strain ATCC BAA-125 / DSM 18197 / FERM 7344 / JCM 9153 / C-125) (Bacillus halodurans) protein is Fumarate hydratase class II.